A 149-amino-acid polypeptide reads, in one-letter code: Transcription factor HY5-like (149 aa).

Residues 1 to 77 (MSLQRPNGNS…RRRGRNPVDK (77 aa)) are disordered. The interaction with COP1 stretch occupies residues 23–36 (ESDEELLMVPDMEA). Ser24 carries the phosphoserine modification. Residues 55-64 (ELDQTQNGVS) show a composition bias toward polar residues. In terms of domain architecture, bZIP spans 78-141 (EYRSLKRLLR…TMLRKMLINT (64 aa)). The basic motif stretch occupies residues 80–100 (RSLKRLLRNRVSAQQARERKK). Residues 106-134 (LESRANELQNNNDQLEEKISTLTNENTML) form a leucine-zipper region.

Belongs to the bZIP family. In terms of assembly, heterodimer; heterodimerizes with HY5 via the leucine-zipper domains. Interacts with COP1 WD40 domain. Interacts with BBX24/STO and BBX25/STH. In terms of processing, ubiquitinated by COP1. Ubiquitination takes place in darkness and leads to its subsequent degradation, thereby preventing the activation of photomorphogenesis signals.

The protein localises to the nucleus. Transcription factor that promotes photomorphogenesis in light. Acts downstream of the light receptor network and directly affects transcription of light-induced genes. Specifically involved in the blue light specific pathway, suggesting that it participates in transmission of cryptochromes (CRY1 and CRY2) signals to downstream responses. In darkness, its degradation prevents the activation of light-induced genes. The chain is Transcription factor HY5-like (HYH) from Arabidopsis thaliana (Mouse-ear cress).